A 160-amino-acid polypeptide reads, in one-letter code: MEIVSKLTLKTIGAQPKPHSVKENTALASIYGRVRGKKVGQSTFGDFIKFEGEFEGVNIATGEVFRSGALILPKVLESLLAGAVDGENTVDFAVEIWAKPSEKGNTGYEYGVKPLIEPAASDELAALRNQVKAALPAPAAAGEAAAEAKPAAKAKAKAEA.

Binds to single-stranded DNA (ssDNA). Has a regulatory effect on phage DNA metabolism and transcription of early genes. The sequence is that of Single-stranded DNA-binding protein (XII) from Enterobacteria phage PRD1 (Bacteriophage PRD1).